The following is a 68-amino-acid chain: ATP synthase F(0) complex subunit 8 (68 aa).

The chain crosses the membrane as a helical span at residues 8–24; it reads TWLITILSMILTLLIVF. Lys54 carries the post-translational modification N6-acetyllysine; alternate. The residue at position 54 (Lys54) is an N6-succinyllysine; alternate. An N6-acetyllysine modification is found at Lys57.

The protein belongs to the ATPase protein 8 family. In terms of assembly, component of the ATP synthase complex composed at least of ATP5F1A/subunit alpha, ATP5F1B/subunit beta, ATP5MC1/subunit c (homooctomer), MT-ATP6/subunit a, MT-ATP8/subunit 8, ATP5ME/subunit e, ATP5MF/subunit f, ATP5MG/subunit g, ATP5MK/subunit k, ATP5MJ/subunit j, ATP5F1C/subunit gamma, ATP5F1D/subunit delta, ATP5F1E/subunit epsilon, ATP5PF/subunit F6, ATP5PB/subunit b, ATP5PD/subunit d, ATP5PO/subunit OSCP. ATP synthase complex consists of a soluble F(1) head domain (subunits alpha(3) and beta(3)) - the catalytic core - and a membrane F(0) domain - the membrane proton channel (subunits c, a, 8, e, f, g, k and j). These two domains are linked by a central stalk (subunits gamma, delta, and epsilon) rotating inside the F1 region and a stationary peripheral stalk (subunits F6, b, d, and OSCP). Interacts with PRICKLE3.

The protein localises to the mitochondrion membrane. In terms of biological role, subunit 8, of the mitochondrial membrane ATP synthase complex (F(1)F(0) ATP synthase or Complex V) that produces ATP from ADP in the presence of a proton gradient across the membrane which is generated by electron transport complexes of the respiratory chain. ATP synthase complex consist of a soluble F(1) head domain - the catalytic core - and a membrane F(1) domain - the membrane proton channel. These two domains are linked by a central stalk rotating inside the F(1) region and a stationary peripheral stalk. During catalysis, ATP synthesis in the catalytic domain of F(1) is coupled via a rotary mechanism of the central stalk subunits to proton translocation. In vivo, can only synthesize ATP although its ATP hydrolase activity can be activated artificially in vitro. Part of the complex F(0) domain. In Lemur catta (Ring-tailed lemur), this protein is ATP synthase F(0) complex subunit 8.